Reading from the N-terminus, the 240-residue chain is MSAVPNAVIPNPDNLSVSAPEKLSGFEWWRRSLQYRTGMGLDPQEKAQFEFDYQHKYLPQQCNSCIEFRDWMLTYSPSVTFMMDHIKKLSPNKEQILNKSNIICDVCDDLKGGGFHPQEGILLCANRIQSKWQLEDILTHELVHVYDHLKFQVNLNDLKHHACTEIRASMLSGECRIFNEIKKTGLGDFGKKFQSCIKRRAILSVSANPICKDSEEAEKVVNSVWQSCFNDTRPFERVYR.

A divalent metal cation is bound at residue His-140. The active site involves Glu-141. Residue His-144 participates in a divalent metal cation binding.

The protein belongs to the peptidase M76 family.

The protein localises to the mitochondrion inner membrane. In terms of biological role, has a dual role in the assembly of mitochondrial ATPase. Acts as a protease that removes N-terminal residues of mitochondrial ATPase CF(0) subunit 6 at the intermembrane space side. Also involved in the correct assembly of the membrane-embedded ATPase CF(0) particle, probably mediating association of subunit 6 with the subunit 9 ring. The chain is Mitochondrial inner membrane protease ATP23 (ATP23) from Scheffersomyces stipitis (strain ATCC 58785 / CBS 6054 / NBRC 10063 / NRRL Y-11545) (Yeast).